A 152-amino-acid polypeptide reads, in one-letter code: Transcriptional regulator MraZ (152 aa).

SpoVT-AbrB domains follow at residues 5–52 (VTSI…PLHE) and 81–124 (ATEC…QDKQ).

It belongs to the MraZ family. Forms oligomers.

The protein resides in the cytoplasm. Its subcellular location is the nucleoid. The chain is Transcriptional regulator MraZ from Actinobacillus pleuropneumoniae serotype 3 (strain JL03).